Here is a 357-residue protein sequence, read N- to C-terminus: UDP-N-acetylglucosamine--N-acetylmuramyl-(pentapeptide) pyrophosphoryl-undecaprenol N-acetylglucosamine transferase (357 aa).

UDP-N-acetyl-alpha-D-glucosamine is bound by residues 13 to 15, R166, S197, and Q292; that span reads SAG.

This sequence belongs to the glycosyltransferase 28 family. MurG subfamily.

The protein localises to the cell membrane. It carries out the reaction di-trans,octa-cis-undecaprenyl diphospho-N-acetyl-alpha-D-muramoyl-L-alanyl-D-glutamyl-meso-2,6-diaminopimeloyl-D-alanyl-D-alanine + UDP-N-acetyl-alpha-D-glucosamine = di-trans,octa-cis-undecaprenyl diphospho-[N-acetyl-alpha-D-glucosaminyl-(1-&gt;4)]-N-acetyl-alpha-D-muramoyl-L-alanyl-D-glutamyl-meso-2,6-diaminopimeloyl-D-alanyl-D-alanine + UDP + H(+). It participates in cell wall biogenesis; peptidoglycan biosynthesis. In terms of biological role, cell wall formation. Catalyzes the transfer of a GlcNAc subunit on undecaprenyl-pyrophosphoryl-MurNAc-pentapeptide (lipid intermediate I) to form undecaprenyl-pyrophosphoryl-MurNAc-(pentapeptide)GlcNAc (lipid intermediate II). This Clostridium novyi (strain NT) protein is UDP-N-acetylglucosamine--N-acetylmuramyl-(pentapeptide) pyrophosphoryl-undecaprenol N-acetylglucosamine transferase.